A 188-amino-acid polypeptide reads, in one-letter code: Elongation factor P (188 aa).

This sequence belongs to the elongation factor P family.

The protein localises to the cytoplasm. Its pathway is protein biosynthesis; polypeptide chain elongation. Functionally, involved in peptide bond synthesis. Stimulates efficient translation and peptide-bond synthesis on native or reconstituted 70S ribosomes in vitro. Probably functions indirectly by altering the affinity of the ribosome for aminoacyl-tRNA, thus increasing their reactivity as acceptors for peptidyl transferase. This Chlorobium chlorochromatii (strain CaD3) protein is Elongation factor P.